Here is a 655-residue protein sequence, read N- to C-terminus: p-hydroxybenzoic acid efflux pump subunit AaeB (655 aa).

Helical transmembrane passes span 13 to 33 (FAVK…HFQL), 38 to 58 (WAVL…GGEP), 69 to 89 (LRII…ISMI), 93 to 113 (LLMI…SSLV), 121 to 141 (WGLS…EPLL), 152 to 172 (EIVI…PRSI), 370 to 390 (LFWL…IAVV), 407 to 427 (FIYG…VIIP), 431 to 451 (QSML…GIEV), 459 to 479 (MGAL…TFHF), and 482 to 502 (FLDS…VILL).

It belongs to the aromatic acid exporter ArAE (TC 2.A.85) family.

It is found in the cell inner membrane. In terms of biological role, forms an efflux pump with AaeA. Could function as a metabolic relief valve, allowing to eliminate certain compounds when they accumulate to high levels in the cell. This is p-hydroxybenzoic acid efflux pump subunit AaeB from Salmonella arizonae (strain ATCC BAA-731 / CDC346-86 / RSK2980).